A 198-amino-acid chain; its full sequence is 3-isopropylmalate dehydratase small subunit (198 aa).

Belongs to the LeuD family. LeuD type 1 subfamily. In terms of assembly, heterodimer of LeuC and LeuD.

The enzyme catalyses (2R,3S)-3-isopropylmalate = (2S)-2-isopropylmalate. Its pathway is amino-acid biosynthesis; L-leucine biosynthesis; L-leucine from 3-methyl-2-oxobutanoate: step 2/4. In terms of biological role, catalyzes the isomerization between 2-isopropylmalate and 3-isopropylmalate, via the formation of 2-isopropylmaleate. This is 3-isopropylmalate dehydratase small subunit from Mycobacterium avium (strain 104).